Consider the following 411-residue polypeptide: 1-deoxy-D-xylulose 5-phosphate reductoisomerase (411 aa).

The NADPH site is built by T11, G12, S13, I14, and N124. 1-deoxy-D-xylulose 5-phosphate is bound at residue K125. Position 126 (E126) interacts with NADPH. D150 contributes to the Mn(2+) binding site. 1-deoxy-D-xylulose 5-phosphate-binding residues include S151, E152, S186, and H209. E152 serves as a coordination point for Mn(2+). Residue G215 participates in NADPH binding. Residues S222, N227, K228, and E231 each contribute to the 1-deoxy-D-xylulose 5-phosphate site. E231 contributes to the Mn(2+) binding site.

Belongs to the DXR family. The cofactor is Mg(2+). It depends on Mn(2+) as a cofactor.

It catalyses the reaction 2-C-methyl-D-erythritol 4-phosphate + NADP(+) = 1-deoxy-D-xylulose 5-phosphate + NADPH + H(+). It functions in the pathway isoprenoid biosynthesis; isopentenyl diphosphate biosynthesis via DXP pathway; isopentenyl diphosphate from 1-deoxy-D-xylulose 5-phosphate: step 1/6. Catalyzes the NADPH-dependent rearrangement and reduction of 1-deoxy-D-xylulose-5-phosphate (DXP) to 2-C-methyl-D-erythritol 4-phosphate (MEP). This Psychrobacter sp. (strain PRwf-1) protein is 1-deoxy-D-xylulose 5-phosphate reductoisomerase.